A 230-amino-acid chain; its full sequence is Large ribosomal subunit protein uL1 (230 aa).

This sequence belongs to the universal ribosomal protein uL1 family. In terms of assembly, part of the 50S ribosomal subunit.

Its function is as follows. Binds directly to 23S rRNA. The L1 stalk is quite mobile in the ribosome, and is involved in E site tRNA release. In terms of biological role, protein L1 is also a translational repressor protein, it controls the translation of the L11 operon by binding to its mRNA. The chain is Large ribosomal subunit protein uL1 from Bifidobacterium longum (strain DJO10A).